The following is an 81-amino-acid chain: MTDLFSSPDHTLDALGLRCPEPVMMVRKTVRNMQPGETLLIIADDPATTRDIPGFCTFMEHELVAKETDGLPYRYLIRKSG.

Residue cysteine 19 is the Cysteine persulfide intermediate of the active site.

The protein belongs to the sulfur carrier protein TusA family. In terms of assembly, interacts with IscS.

The protein resides in the cytoplasm. The protein operates within tRNA modification. Its function is as follows. Sulfur carrier protein involved in sulfur trafficking in the cell. Part of a sulfur-relay system required for 2-thiolation during synthesis of 2-thiouridine of the modified wobble base 5-methylaminomethyl-2-thiouridine (mnm(5)s(2)U) in tRNA. Interacts with IscS and stimulates its cysteine desulfurase activity. Accepts an activated sulfur from IscS, which is then transferred to TusD, and thus determines the direction of sulfur flow from IscS to 2-thiouridine formation. Also appears to be involved in sulfur transfer for the biosynthesis of molybdopterin. The polypeptide is Sulfur carrier protein TusA (Escherichia coli (strain SMS-3-5 / SECEC)).